The sequence spans 723 residues: Protein Aster-A (723 aa).

A compositionally biased stretch (low complexity) spans 1–18; that stretch reads MFDTTPHSGRSSPSSSPS. Residues 1–63 form a disordered region; that stretch reads MFDTTPHSGR…SGVSGTLSTQ (63 aa). Over residues 28 to 38 the composition is skewed to pro residues; that stretch reads PSRPPSAPEPE. The GRAM domain maps to 93 to 160; it reads EDFRKLFSKL…KEVTCLKKEK (68 aa). The segment at 257 to 337 is disordered; it reads SPSGAADRSQ…DGPTSNLGPL (81 aa). Residues Ser265, Ser269, and Ser273 each carry the phosphoserine modification. Positions 302–314 are enriched in polar residues; sequence DSQLDASSSQTVT. One can recognise a VASt domain in the interval 370-541; it reads SGRLLINSVF…ELAKAEKVSL (172 aa). Ser418 is subject to Phosphoserine. Residues 562–601 form a disordered region; sequence LSWRGHRDGPQHPDPDPCTQTSMHTSGSLSSRFSEPSVDQ. Residues 566–576 are compositionally biased toward basic and acidic residues; it reads GHRDGPQHPDP. Polar residues predominate over residues 579 to 595; that stretch reads CTQTSMHTSGSLSSRFS. Residues 610-630 form a helical membrane-spanning segment; that stretch reads ALVLISIVLIVLIALNALLFY.

It is found in the endoplasmic reticulum membrane. The protein localises to the cell membrane. It localises to the cytoplasmic vesicle. The protein resides in the autophagosome. Its function is as follows. Cholesterol transporter that mediates non-vesicular transport of cholesterol from the plasma membrane (PM) to the endoplasmic reticulum (ER). Contains unique domains for binding cholesterol and the PM, thereby serving as a molecular bridge for the transfer of cholesterol from the PM to the ER. Plays a crucial role in cholesterol homeostasis and has the unique ability to localize to the PM based on the level of membrane cholesterol. In lipid-poor conditions localizes to the ER membrane and in response to excess cholesterol in the PM is recruited to the endoplasmic reticulum-plasma membrane contact sites (EPCS) which is mediated by the GRAM domain. At the EPCS, the sterol-binding VASt/ASTER domain binds to the cholesterol in the PM and facilitates its transfer from the PM to ER. May play a role in tumor progression. Plays a role in autophagy regulation and is required for biogenesis of the autophagosome. This function in autophagy requires its cholesterol-transfer activity. This chain is Protein Aster-A, found in Rattus norvegicus (Rat).